Reading from the N-terminus, the 111-residue chain is uncharacterized protein (111 aa).

The N-myristoyl glycine; by host moiety is linked to residue G2.

This is an uncharacterized protein from Acanthamoeba polyphaga mimivirus (APMV).